Here is an 885-residue protein sequence, read N- to C-terminus: Cytosolic carboxypeptidase-like protein 5 (885 aa).

A Peptidase M14 domain is found at 157–570 (YPFSYSDCQD…AMAIAALDMA (414 aa)). Zn(2+) contacts are provided by His-252 and Glu-255. Residues 343-402 (NSQSPSEHQHSSHLPPDAPLSDPEKADSLQNRAHLGRSSSGDKPEAWTQTEVAEQKPNSV) are disordered. Residues 388–402 (AWTQTEVAEQKPNSV) show a composition bias toward polar residues. Zn(2+) is bound at residue His-434. Residue Glu-516 is the Proton donor/acceptor of the active site. Disordered stretches follow at residues 605 to 733 (TTVN…LASS) and 783 to 839 (RLQA…PRPC). Over residues 620 to 640 (PPRSNNGLPVSCSENTLSRAR) the composition is skewed to polar residues. Composition is skewed to low complexity over residues 641–666 (SFST…NSPS) and 714–733 (PTSS…LASS). Ser-840 is subject to Phosphoserine.

It belongs to the peptidase M14 family. The cofactor is Zn(2+).

Its subcellular location is the cytoplasm. It localises to the cytosol. It is found in the nucleus. The protein resides in the cytoskeleton. The protein localises to the spindle. Its subcellular location is the midbody. It catalyses the reaction gamma-L-glutamyl-L-glutamyl-[protein] + H2O = L-glutamyl-[protein] + L-glutamate. The enzyme catalyses (L-glutamyl)(n+1)-gamma-L-glutamyl-L-glutamyl-[protein] + H2O = (L-glutamyl)(n)-gamma-L-glutamyl-L-glutamyl-[protein] + L-glutamate. It carries out the reaction C-terminal L-alpha-aminoacyl-L-glutamyl-[tubulin] + H2O = C-terminal L-alpha-aminoacyl-[tubulin] + L-glutamate. The catalysed reaction is C-terminal L-alpha-aminoacyl-L-glutamyl-L-glutamyl-[tubulin] + H2O = C-terminal L-alpha-aminoacyl-L-glutamyl-[tubulin] + L-glutamate. Its function is as follows. Metallocarboxypeptidase that mediates deglutamylation of tubulin and non-tubulin target proteins. Catalyzes the removal of polyglutamate side chains present on the gamma-carboxyl group of glutamate residues within the C-terminal tail of alpha- and beta-tubulin. Cleaves alpha- and gamma-linked polyglutamate tubulin side-chain, as well as the branching point glutamate. Also catalyzes the removal of alpha-linked glutamate residues from the carboxy-terminus of alpha-tubulin. Mediates deglutamylation of nucleotidyltransferase CGAS, leading to CGAS antiviral defense response activation. The sequence is that of Cytosolic carboxypeptidase-like protein 5 (AGBL5) from Bos taurus (Bovine).